We begin with the raw amino-acid sequence, 853 residues long: Neural cell adhesion molecule 1 (853 aa).

The first 19 residues, 1-19 (MLQTKNLIWTLFFLGTAVS), serve as a signal peptide directing secretion. Ig-like C2-type domains lie at 20 to 111 (LQVD…ATVN), 116 to 205 (QKLM…KDIQ), 212 to 300 (PTVQ…ASIH), 307 to 412 (PKIT…LEVQ), and 415 to 500 (PKLQ…ESLE). At 20 to 719 (LQVDIVPSQG…NGSPTSGLST (700 aa)) the chain is on the extracellular side. Disulfide bonds link Cys-41/Cys-96 and Cys-139/Cys-189. Residues 152-156 (KHKGR) and 161-165 (KKDVR) each bind heparin. Asn-222 carries N-linked (GlcNAc...) asparagine glycosylation. Cys-235 and Cys-286 form a disulfide bridge. 5 N-linked (GlcNAc...) asparagine glycosylation sites follow: Asn-314, Asn-346, Asn-432, Asn-458, and Asn-487. Cysteines 328 and 394 form a disulfide. A disulfide bridge links Cys-435 with Cys-488. Fibronectin type-III domains are found at residues 508–607 (TPSS…TQPV) and 609–704 (EPSA…SAQP). A helical membrane pass occupies residues 720-737 (GAIVGILVVTFVLLLVAV). Over 738 to 853 (DVTCYFLNKC…TQIKVNESKA (116 aa)) the chain is Cytoplasmic. The interval 764-853 (GAKGKDMEEG…TQIKVNESKA (90 aa)) is disordered. 2 stretches are compositionally biased toward basic and acidic residues: residues 766–807 (KGKD…HTEP) and 815–829 (EPEKGPVEAKPETET). 2 positions are modified to phosphoserine: Ser-778 and Ser-782. The span at 838 to 853 (TVPNDATQIKVNESKA) shows a compositional bias: polar residues.

Interacts with MDK. Found in a complex with SLC39A6, SLC39A10 and with NCAM1; this complex controls NCAM1 phosphorylation and integration into focal adhesion complexes during epithelial-tomesenchymal transition. Interacts with synaptic plasticity regulator PANTS. Polysialylated by ST8SIA2 and ST8SIA4. Polysialylation modulates cell interactions by confering both attractive and repulsive properties that are highly regulated by ST8SIA2 and ST8SIA4. Polysialylation is formed on a-2,3-linked sialic acid of core glycans.

Its subcellular location is the cell membrane. Functionally, this protein is a cell adhesion molecule involved in neuron-neuron adhesion, neurite fasciculation, outgrowth of neurites, etc. The sequence is that of Neural cell adhesion molecule 1 from Bos taurus (Bovine).